Here is a 215-residue protein sequence, read N- to C-terminus: Secretory component protein psh3 (215 aa).

Residues 1-21 (MAKRSIFRFADEKGLKVAARY) lie on the Cytoplasmic side of the membrane. Residues 22–42 (GVLMSTSFIFALLFHSSVADV) traverse the membrane as a helical segment. Over 43-67 (NTLWSPGPESAFDAAETYYTLVAGS) the chain is Extracellular. A helical transmembrane segment spans residues 68–88 (HFIVKYTVYTIMGLNMIFHLI). Over 89-105 (QATGAKGDDKLFFYSST) the chain is Cytoplasmic. Residues 106–126 (LLYLTALILFIVNVAPSMLVV) form a helical membrane-spanning segment. At 127–147 (KLQNYVQFPRNMHLSVLAASH) the chain is on the extracellular side. The chain crosses the membrane as a helical span at residues 148-168 (VLVEFLLAGVILIQLGYVFGY). The Cytoplasmic segment spans residues 169–215 (HVQSIQQREYAEDMREQELAEKAKLESESATTQSVETVSTESVSKRK). Residues 190 to 215 (KAKLESESATTQSVETVSTESVSKRK) are disordered. Positions 196-215 (ESATTQSVETVSTESVSKRK) are enriched in low complexity.

This sequence to yeast SHR3. Monomer.

It localises to the endoplasmic reticulum membrane. Functionally, involved in amino acid permease processing and required for the efficient translocation of structurally related amino acid permeases from the endoplasmic reticulum to the plasma membrane. The chain is Secretory component protein psh3 (psh3) from Schizosaccharomyces pombe (strain 972 / ATCC 24843) (Fission yeast).